Consider the following 153-residue polypeptide: FAD synthase (153 aa).

ATP-binding positions include 9–10, 14–17, Asn-92, and Tyr-119; these read TF and HPGH.

It belongs to the archaeal FAD synthase family. Homodimer. A divalent metal cation serves as cofactor.

It catalyses the reaction FMN + ATP + H(+) = FAD + diphosphate. It functions in the pathway cofactor biosynthesis; FAD biosynthesis; FAD from FMN: step 1/1. Its function is as follows. Catalyzes the transfer of the AMP portion of ATP to flavin mononucleotide (FMN) to produce flavin adenine dinucleotide (FAD) coenzyme. In Methanosphaerula palustris (strain ATCC BAA-1556 / DSM 19958 / E1-9c), this protein is FAD synthase.